The primary structure comprises 547 residues: Chaperonin GroEL (547 aa).

Residues 30–33 (TLGP), Lys-51, 87–91 (DGTTT), Gly-415, 480–482 (NAA), and Asp-496 each bind ATP.

This sequence belongs to the chaperonin (HSP60) family. In terms of assembly, forms a cylinder of 14 subunits composed of two heptameric rings stacked back-to-back. Interacts with the co-chaperonin GroES.

Its subcellular location is the cytoplasm. The catalysed reaction is ATP + H2O + a folded polypeptide = ADP + phosphate + an unfolded polypeptide.. Functionally, together with its co-chaperonin GroES, plays an essential role in assisting protein folding. The GroEL-GroES system forms a nano-cage that allows encapsulation of the non-native substrate proteins and provides a physical environment optimized to promote and accelerate protein folding. This chain is Chaperonin GroEL, found in Glaesserella parasuis serovar 5 (strain SH0165) (Haemophilus parasuis).